The primary structure comprises 158 residues: C-type lectin (158 aa).

An N-terminal signal peptide occupies residues 1–23 (MWQFTVVSLGWLAVFLSLSGAKG). 3 disulfides stabilise this stretch: cysteine 26-cysteine 37, cysteine 54-cysteine 154, and cysteine 129-cysteine 146. The C-type lectin domain occupies 33-155 (RNGVCNKLFP…CASLHPFICQ (123 aa)). A Mannose-binding motif is present at residues 119–121 (EPN). Ca(2+) is bound by residues glutamate 127, asparagine 142, and aspartate 143.

It belongs to the true venom lectin family. In terms of tissue distribution, expressed by the venom gland.

It is found in the secreted. In terms of biological role, mannose-binding lectin which recognizes specific carbohydrate structures and agglutinates a variety of animal cells by binding to cell-surface glycoproteins and glycolipids. May be a calcium-dependent lectin. The sequence is that of C-type lectin from Cerberus rynchops (Dog-faced water snake).